The chain runs to 597 residues: Arginine--tRNA ligase (597 aa).

Residues Pro-125–His-135 carry the 'HIGH' region motif.

Belongs to the class-I aminoacyl-tRNA synthetase family. In terms of assembly, monomer.

It is found in the cytoplasm. The enzyme catalyses tRNA(Arg) + L-arginine + ATP = L-arginyl-tRNA(Arg) + AMP + diphosphate. The polypeptide is Arginine--tRNA ligase (Bacteroides thetaiotaomicron (strain ATCC 29148 / DSM 2079 / JCM 5827 / CCUG 10774 / NCTC 10582 / VPI-5482 / E50)).